Here is a 450-residue protein sequence, read N- to C-terminus: MQSIFGTDGIRGRFNEELTYSLAYKVGYALGSTLKKKSPILIGRDTRISGDILLQAITQGINESGKKFINLGICPTPAIPFLIKKENLSSGIMISASHNPPEYNGIKIFDHNGQKITRYFENKIQKLIEETNQNISVPTKVIPLNTNKNLMDIYIKSLVQAMDGENLSGLKIILDTCYGSATTCAKEIFQSLGADVRVINNSKNGSKINMNCGSTNLAPLKKALKESPADMGFSFDEDADRVIGIDSKGNVLDGDHILFLWGRELMEQKILTNNLLISTQMANLGFEKAWKKIGGVLYRTDVGDKYVHEAIKEKRAVLGGEQSGHILSKINNFSGDGILTALQISKYCKKKNINLNDWLKSSFEPFPQKLTNIKLNFNINKLSLKAKILIDKTIENFQALYSHNCRVYIRPSGTEPLIRVLVEAKSHKKVNSLSSEITNKLSLEINKIIN.

The Phosphoserine intermediate role is filled by S97. Mg(2+)-binding residues include S97, D236, D238, and D240. S97 bears the Phosphoserine mark.

This sequence belongs to the phosphohexose mutase family. It depends on Mg(2+) as a cofactor. Activated by phosphorylation.

It carries out the reaction alpha-D-glucosamine 1-phosphate = D-glucosamine 6-phosphate. Catalyzes the conversion of glucosamine-6-phosphate to glucosamine-1-phosphate. The sequence is that of Phosphoglucosamine mutase from Prochlorococcus marinus (strain AS9601).